A 701-amino-acid chain; its full sequence is Pseudouridylate synthase PUS7L (701 aa).

Serine 79 carries the phosphoserine modification. Catalysis depends on aspartate 339, which acts as the Nucleophile. Residues 424–647 (GFVNYYGPQR…PGCYRQILKH (224 aa)) enclose the TRUD domain.

Belongs to the pseudouridine synthase TruD family.

It carries out the reaction a uridine in mRNA = a pseudouridine in mRNA. Functionally, pseudouridine synthase that catalyzes pseudouridylation of mRNAs. The protein is Pseudouridylate synthase PUS7L of Homo sapiens (Human).